Here is a 67-residue protein sequence, read N- to C-terminus: MDIADIESRSSQELHEILVNLRKEFVNLVFQKKLAQCNNISRFSLIRKSIARILTTLNKRRREEKNA.

It belongs to the universal ribosomal protein uL29 family.

This is Large ribosomal subunit protein uL29 from Wolbachia pipientis wMel.